Consider the following 93-residue polypeptide: Putative pterin-4-alpha-carbinolamine dehydratase (93 aa).

It belongs to the pterin-4-alpha-carbinolamine dehydratase family.

The catalysed reaction is (4aS,6R)-4a-hydroxy-L-erythro-5,6,7,8-tetrahydrobiopterin = (6R)-L-erythro-6,7-dihydrobiopterin + H2O. The protein is Putative pterin-4-alpha-carbinolamine dehydratase of Nostoc punctiforme (strain ATCC 29133 / PCC 73102).